The sequence spans 463 residues: Ribulose bisphosphate carboxylase (463 aa).

Asparagine 116 is a binding site for substrate. Residue lysine 171 is the Proton acceptor of the active site. Lysine 173 contacts substrate. 3 residues coordinate Mg(2+): lysine 196, aspartate 198, and glutamate 199. Lysine 196 is subject to N6-carboxylysine. Histidine 294 (proton acceptor) is an active-site residue. 3 residues coordinate substrate: arginine 295, histidine 328, and serine 375.

The protein belongs to the RuBisCO large chain family. Type II subfamily. As to quaternary structure, homodimer. Mg(2+) serves as cofactor.

It carries out the reaction 2 (2R)-3-phosphoglycerate + 2 H(+) = D-ribulose 1,5-bisphosphate + CO2 + H2O. The enzyme catalyses D-ribulose 1,5-bisphosphate + O2 = 2-phosphoglycolate + (2R)-3-phosphoglycerate + 2 H(+). Its function is as follows. RuBisCO catalyzes two reactions: the carboxylation of D-ribulose 1,5-bisphosphate, the primary event in carbon dioxide fixation, as well as the oxidative fragmentation of the pentose substrate. Both reactions occur simultaneously and in competition at the same active site. The sequence is that of Ribulose bisphosphate carboxylase from Hydrogenovibrio marinus.